Here is a 146-residue protein sequence, read N- to C-terminus: Glycosylation-dependent cell adhesion molecule 1 (146 aa).

Positions 1 to 19 (MKFFTVLLFASLAATSLAA) are cleaved as a signal peptide. Positions 25–112 (DELHLRTQPT…SAATSEGKLT (88 aa)) are disordered. Basic and acidic residues predominate over residues 48–60 (ISKESTSSKDLSK). Residues Ser-54, Ser-59, and Ser-71 each carry the phosphoserine modification. The span at 74 to 106 (NVGTESTKPQSQEAQDGLRSGSSQQEETTSAAT) shows a compositional bias: polar residues.

Belongs to the PP3/GlyCAM-1 family. In terms of processing, extensively O-glycosylated. Lymph nodes. Associated with the lumenal surface of the high endothelial venules of peripheral lymph nodes.

The protein resides in the cell membrane. Functionally, adhesion molecule that accomplishes cell binding by presenting carbohydrate(s) to the lectin domain of L-selectin. The sequence is that of Glycosylation-dependent cell adhesion molecule 1 (Glycam1) from Rattus norvegicus (Rat).